A 217-amino-acid polypeptide reads, in one-letter code: Probable glutathione S-transferase (217 aa).

A GST N-terminal domain is found at 2 to 81 (AEVKLLGLRY…YIDEAFEGPS (80 aa)). Residues serine 12, lysine 39, isoleucine 53, and 65-66 (ES) contribute to the glutathione site. The 125-residue stretch at 86-210 (DPYDRALARF…ELLIRYRAYI (125 aa)) folds into the GST C-terminal domain.

Belongs to the GST superfamily. HSP26 family.

It carries out the reaction RX + glutathione = an S-substituted glutathione + a halide anion + H(+). This Solanum tuberosum (Potato) protein is Probable glutathione S-transferase (PRP1).